Consider the following 271-residue polypeptide: Phosphate import ATP-binding protein PstB (271 aa).

Residues 25–266 (FDTKNLNLWY…PSDKRTEDYI (242 aa)) enclose the ABC transporter domain. 57 to 64 (GPSGCGKS) lines the ATP pocket.

Belongs to the ABC transporter superfamily. Phosphate importer (TC 3.A.1.7) family. The complex is composed of two ATP-binding proteins (PstB), two transmembrane proteins (PstC and PstA) and a solute-binding protein (PstS).

Its subcellular location is the cell membrane. It carries out the reaction phosphate(out) + ATP + H2O = ADP + 2 phosphate(in) + H(+). Part of the ABC transporter complex PstSACB involved in phosphate import. Responsible for energy coupling to the transport system. The chain is Phosphate import ATP-binding protein PstB from Bacillus anthracis.